The primary structure comprises 265 residues: Orotidine 5'-phosphate decarboxylase (265 aa).

Substrate is bound by residues Asp-38, 60–62, 91–100, Tyr-213, and Arg-232; these read KTH and DRKFADIGNT. Catalysis depends on Lys-93, which acts as the Proton donor.

The protein belongs to the OMP decarboxylase family.

The catalysed reaction is orotidine 5'-phosphate + H(+) = UMP + CO2. It functions in the pathway pyrimidine metabolism; UMP biosynthesis via de novo pathway; UMP from orotate: step 2/2. This chain is Orotidine 5'-phosphate decarboxylase (pyrG), found in Rhizopus oryzae (Mucormycosis agent).